The primary structure comprises 183 residues: Apo-citrate lyase phosphoribosyl-dephospho-CoA transferase (183 aa).

The protein belongs to the CitX family.

It catalyses the reaction apo-[citrate lyase ACP] + 2'-(5''-triphospho-alpha-D-ribosyl)-3'-dephospho-CoA = holo-[citrate lyase ACP] + diphosphate. In terms of biological role, transfers 2-(5''-triphosphoribosyl)-3'-dephosphocoenzyme-A on a serine residue to the apo-acyl carrier protein (gamma chain) of the citrate lyase to yield holo-acyl carrier protein. This Escherichia coli O45:K1 (strain S88 / ExPEC) protein is Apo-citrate lyase phosphoribosyl-dephospho-CoA transferase.